A 795-amino-acid polypeptide reads, in one-letter code: MAVLLLLLRALRRGPGPGPRPLWGPGPAWSPGFPARPGRGRPYMASRPPGDLAEAGGRALQSLQLRLLTPTFEGINGLLLKQHLVQNPVRLWQLLGGTFYFNTSRLKQKNKEKDKSKGKAPEEDEEERRRRERDDQMYRERLRTLLVIAVVMSLLNALSTSGGSISWNDFVHEMLAKGEVQRVQVVPESDVVEVYLHPGAVVFGRPRLALMYRMQVANIDKFEEKLRAAEDELNIEAKDRIPVSYKRTGFFGNALYSVGMTAVGLAILWYVFRLAGMTGREGGFSAFNQLKMARFTIVDGKMGKGVSFKDVAGMHEAKLEVREFVDYLKSPERFLQLGAKVPKGALLLGPPGCGKTLLAKAVATEAQVPFLAMAGPEFVEVIGGLGAARVRSLFKEARARAPCIVYIDEIDAVGKKRSTTMSGFSNTEEEQTLNQLLVEMDGMGTTDHVIVLASTNRADILDGALMRPGRLDRHVFIDLPTLQERREIFEQHLKSLKLTQSSTFYSQRLAELTPGFSGADIANICNEAALHAAREGHTSVHTLNFEYAVERVLAGTAKKSKILSKEEQKVVAFHESGHALVGWMLEHTEAVMKVSITPRTNAALGFAQMLPRDQHLFTKEQLFERMCMALGGRASEALSFNEVTSGAQDDLRKVTRIAYSMVKQFGMAPGIGPISFPEAQEGLMGIGRRPFSQGLQQMMDHEARLLVAKAYRHTEKVLQDNLDKLQALANALLEKEVINYEDIEALIGPPPHGPKKMIAPQRWIDAQREKQDLGEEETEETQQPPLGGEEPTWPK.

The N-terminal 43 residues, 1 to 43, are a transit peptide targeting the mitochondrion; sequence MAVLLLLLRALRRGPGPGPRPLWGPGPAWSPGFPARPGRGRPY. Positions 44-105 are cleaved as a propeptide — removed in mature form; the sequence is MASRPPGDLA…GGTFYFNTSR (62 aa). At 106-144 the chain is on the mitochondrial matrix side; it reads LKQKNKEKDKSKGKAPEEDEEERRRRERDDQMYRERLRT. Residues 108 to 133 are disordered; it reads QKNKEKDKSKGKAPEEDEEERRRRER. The span at 109-133 shows a compositional bias: basic and acidic residues; that stretch reads KNKEKDKSKGKAPEEDEEERRRRER. The helical transmembrane segment at 145–165 threads the bilayer; that stretch reads LLVIAVVMSLLNALSTSGGSI. Residues 166–248 lie on the Mitochondrial intermembrane side of the membrane; sequence SWNDFVHEML…DRIPVSYKRT (83 aa). Residues 249–269 form a helical membrane-spanning segment; it reads GFFGNALYSVGMTAVGLAILW. At 270 to 795 the chain is on the mitochondrial matrix side; that stretch reads YVFRLAGMTG…LGGEEPTWPK (526 aa). Positions 312, 352, 353, 354, 355, 356, and 357 each coordinate ATP. Tyr505 carries the 3'-nitrotyrosine modification. Residue His574 participates in Zn(2+) binding. Glu575 is a catalytic residue. His578 and Asp650 together coordinate Zn(2+). The segment at 701–795 is interaction with PPIF; it reads HEARLLVAKA…LGGEEPTWPK (95 aa). Residues 751-795 form a disordered region; that stretch reads PHGPKKMIAPQRWIDAQREKQDLGEEETEETQQPPLGGEEPTWPK.

It in the N-terminal section; belongs to the AAA ATPase family. In the C-terminal section; belongs to the peptidase M41 family. In terms of assembly, forms heterooligomers with AFG3L2; the m-AAA protease is composed of heterohexamers of AFG3L2 and SPG7. Component of the mitochondrial permeability transition pore complex (mPTPC), at least composed of SPG7, VDAC1 and PPIF. Interacts with MAIP1. The cofactor is Zn(2+). Upon import into the mitochondrion, the N-terminal transit peptide is cleaved by the mitochondrial-processing peptidase (MPP) to generate an intermediate form which undergoes a second proteolytic cleavage mediated by proteases AFG3L2 removing an additional N-terminal fragment to generate the proteolytically active mature form. In terms of tissue distribution, ubiquitous.

It localises to the mitochondrion inner membrane. The enzyme catalyses ATP + H2O = ADP + phosphate + H(+). Catalytic component of the m-AAA protease, a protease that plays a key role in proteostasis of inner mitochondrial membrane proteins, and which is essential for axonal and neuron development. SPG7 possesses both ATPase and protease activities: the ATPase activity is required to unfold substrates, threading them into the internal proteolytic cavity for hydrolysis into small peptide fragments. The m-AAA protease exerts a dual role in the mitochondrial inner membrane: it mediates the processing of specific regulatory proteins and ensures protein quality control by degrading misfolded polypeptides. Mediates protein maturation of the mitochondrial ribosomal subunit MRPL32/bL32m by catalyzing the cleavage of the presequence of MRPL32/bL32m prior to assembly into the mitochondrial ribosome. Acts as a regulator of calcium in neurons by mediating degradation of SMDT1/EMRE before its assembly with the uniporter complex, limiting the availability of SMDT1/EMRE for MCU assembly and promoting efficient assembly of gatekeeper subunits with MCU. Also regulates mitochondrial calcium by catalyzing degradation of MCU. Plays a role in the formation and regulation of the mitochondrial permeability transition pore (mPTP) and its proteolytic activity is dispensable for this function. The polypeptide is Mitochondrial inner membrane m-AAA protease component paraplegin (Homo sapiens (Human)).